A 623-amino-acid chain; its full sequence is Leucine-rich repeat, immunoglobulin-like domain and transmembrane domain-containing protein 1 (623 aa).

The N-terminal stretch at 1–21 is a signal peptide; that stretch reads MWVALGMLWLLALGGPHQAWS. An LRRNT domain is found at 22-59; that stretch reads FCPSQCSCSLHILSDGSKARTVVCSDPDLTLPPASIPP. The Lumenal segment spans residues 22–526; it reads FCPSQCSCSL…EVVDAEGTQR (505 aa). LRR repeat units lie at residues 60 to 81, 84 to 105, 108 to 128, 132 to 153, and 156 to 177; these read DTCKLRLERTAIRRVPGETFRP, RLEQLWLPYNALSELSTLMLRG, RLRELRLPGNHLVTFPWAALK, QLQLLDLQANRLSTLPPEAVHF, and NLTFLDLSNNQLMRLPEELLDT. The N-linked (GlcNAc...) asparagine glycan is linked to asparagine 156. Positions 201–253 constitute an LRRCT domain; it reads NPWVCDCRLYDLVHLLDGWASNLIFIEARLRCGSPRSLAGVAFSQLELRKCQS. Positions 266-332 constitute an Ig-like C2-type domain; that stretch reads PLGSTVLLRC…SGDYICQAKN (67 aa). The cysteines at positions 275 and 328 are disulfide-linked. N-linked (GlcNAc...) asparagine glycans are attached at residues asparagine 296 and asparagine 455. The region spanning 430–518 is the Fibronectin type-III domain; it reads MVRSLKVVGD…QCVIFSTDEV (89 aa). The stretch at 525 to 548 is one LRR 6 repeat; sequence QRLINMVVISVAAIIALPPTLLVC. Residues 527–547 traverse the membrane as a helical segment; the sequence is LINMVVISVAAIIALPPTLLV. Over 548–623 the chain is Cytoplasmic; that stretch reads CCGALRRRCH…GGRRINEYFC (76 aa).

In terms of assembly, homodimer. Interacts with LRIT2; may form a heterodimer with LRIT2. Interacts (via its N-terminal extracellular domain) with metabotropic glutamate receptor GRM6. Interacts (via its extreme C-terminus) with the scaffold protein FRMPD2 (via the third PDZ domain); the interaction leads to their colocalization in photoreceptor synapses. In terms of tissue distribution, retina, outer segments of photoreceptor cells.

It is found in the endoplasmic reticulum membrane. The protein resides in the cell projection. The protein localises to the dendrite. Photoreceptor synaptic protein essential for normal vision. Involved in synapse formation in cone photoreceptor cells. The polypeptide is Leucine-rich repeat, immunoglobulin-like domain and transmembrane domain-containing protein 1 (Lrit1) (Rattus norvegicus (Rat)).